The sequence spans 1483 residues: Heme-responsive zinc finger transcription factor HAP1 (1483 aa).

Polar residues predominate over residues 1–50; sequence MSNTPYNSSVPSIASMTQSSVSRSPNMHTATTPGANTSSNSPPLHMSSDS. Residues 1-56 are disordered; that stretch reads MSNTPYNSSVPSIASMTQSSVSRSPNMHTATTPGANTSSNSPPLHMSSDSSKIKRK. The Zn(2+) site is built by cysteine 64, cysteine 67, cysteine 74, cysteine 81, cysteine 84, and cysteine 93. Residues 64-93 constitute a DNA-binding region (zn(2)-C6 fungal-type); the sequence is CTICRKRKVKCDKLRPHCQQCTKTGVAHLC. Residues 105 to 134 are a coiled coil; it reads EKELLKDNELKKLRERVKSLEKTLSKVHSS. The segment covering 162–176 has biased composition (polar residues); that stretch reads VNANTGSASSASHMH. A disordered region spans residues 162 to 208; that stretch reads VNANTGSASSASHMHQQQQQQQQQEQQQDFSRSANANANSSSLSISN. Low complexity predominate over residues 177 to 208; it reads QQQQQQQQQEQQQDFSRSANANANSSSLSISN. The interval 244–444 is heme-responsive; required for HMC formation; it reads KGDPYLKLLW…NTIPHHQPQS (201 aa). HRM repeat units lie at residues 280–285, 299–304, 323–328, 347–352, 389–394, and 415–420; these read KCPINH, KCPVDH, RCPVDH, and RCPIDH. 2 stretches are compositionally biased toward polar residues: residues 432–447 and 706–734; these read STHNTIPHHQPQSGSH and QLNATIPATSQDVSNNGSKKANPSTNPTL. Disordered stretches follow at residues 432–458 and 706–767; these read STHNTIPHHQPQSGSHARSHPAQNRKH and QLNA…KENQ. Positions 735 to 759 are enriched in low complexity; the sequence is NNNMSAATTNSSSRSGSADSRSGSN. Residues 1192–1197 form an HRM 7 repeat; it reads KCPVYQ. Disordered stretches follow at residues 1266 to 1289 and 1386 to 1411; these read DGYIDNNSNNDIPRGISPKPSNGL and NTDTSANGSALSTLTSPQGSDLASNS. Over residues 1388–1411 the composition is skewed to polar residues; sequence DTSANGSALSTLTSPQGSDLASNS.

In terms of assembly, binds DNA as a homodimer. Interacts with SRO9 and YDJ1. In the absence of heme, binds to at least four cellular proteins, including YDJ1 and SRO9, forming a high-molecular-weight complex (HMC) which results in repression of its activity and dictates its DNA-binding specificity.

The protein resides in the nucleus. Regulation of oxygen dependent gene expression. It modulates the expression of Iso-1 (CYP1) and Iso-2 (CYP3) cytochrome c. In response to heme, promotes transcription of genes encoding functions required for respiration, controlling oxidative damage and repression of anaerobic genes. Binds to the sequence 5'-CGGNNNTNNCGG-3'. This is Heme-responsive zinc finger transcription factor HAP1 (HAP1) from Saccharomyces cerevisiae (strain JAY291) (Baker's yeast).